The chain runs to 143 residues: Transcriptional regulator MraZ (143 aa).

2 consecutive SpoVT-AbrB domains span residues E5–E47 and A76–R119.

The protein belongs to the MraZ family. In terms of assembly, forms oligomers.

It localises to the cytoplasm. The protein resides in the nucleoid. The chain is Transcriptional regulator MraZ from Halothermothrix orenii (strain H 168 / OCM 544 / DSM 9562).